The chain runs to 449 residues: NADH-quinone oxidoreductase subunit H (449 aa).

Helical transmembrane passes span 23–43, 93–113, 137–157, 176–196, 209–229, 258–280, 300–320, 332–352, and 368–388; these read WWVI…LTLF, AVYL…FSVI, VAVL…VLGG, MISY…YAGS, LWYG…MVGE, ALFF…TLFL, YWPL…FIWL, FMAF…VAVA, and LLIG…IGGA. A compositionally biased stretch (polar residues) spans 427–442; it reads RSSPIASSMPQPSAAT. The tract at residues 427–449 is disordered; the sequence is RSSPIASSMPQPSAATRSAGEEI.

The protein belongs to the complex I subunit 1 family. In terms of assembly, NDH-1 is composed of 14 different subunits. Subunits NuoA, H, J, K, L, M, N constitute the membrane sector of the complex.

It is found in the cell membrane. The enzyme catalyses a quinone + NADH + 5 H(+)(in) = a quinol + NAD(+) + 4 H(+)(out). In terms of biological role, NDH-1 shuttles electrons from NADH, via FMN and iron-sulfur (Fe-S) centers, to quinones in the respiratory chain. The immediate electron acceptor for the enzyme in this species is believed to be ubiquinone. Couples the redox reaction to proton translocation (for every two electrons transferred, four hydrogen ions are translocated across the cytoplasmic membrane), and thus conserves the redox energy in a proton gradient. This subunit may bind ubiquinone. This Nocardioides sp. (strain ATCC BAA-499 / JS614) protein is NADH-quinone oxidoreductase subunit H.